A 330-amino-acid chain; its full sequence is Peroxidase N1 (330 aa).

The first 29 residues, 1 to 29 (MEYYHHSINKMAMFMVILVLAIDVTMVLG), serve as a signal peptide directing secretion. The residue at position 30 (Gln30) is a Pyrrolidone carboxylic acid. 4 disulfides stabilise this stretch: Cys41-Cys117, Cys74-Cys79, Cys123-Cys326, and Cys201-Cys233. His72 (proton acceptor) is an active-site residue. 5 residues coordinate Ca(2+): Asp73, Val76, Gly78, Asp80, and Ser82. Pro164 is a binding site for substrate. His194 serves as a coordination point for heme b. A Ca(2+)-binding site is contributed by Thr195. A glycan (N-linked (GlcNAc...) asparagine) is linked at Asn212. The Ca(2+) site is built by Asp246 and Asp254.

The protein belongs to the peroxidase family. Classical plant (class III) peroxidase subfamily. Ca(2+) is required as a cofactor. It depends on heme b as a cofactor. As to expression, expressed at a high level in roots and at a trace level in lower leaves. Not expressed in upper leaves, stems, flowers, seeds and shoot apices.

It is found in the secreted. The enzyme catalyses 2 a phenolic donor + H2O2 = 2 a phenolic radical donor + 2 H2O. Removal of H(2)O(2), oxidation of toxic reductants, biosynthesis and degradation of lignin, suberization, auxin catabolism, response to environmental stresses such as wounding, pathogen attack and oxidative stress. These functions might be dependent on each isozyme/isoform in each plant tissue. Can use NADH, NADPH and monolignols as substrates. The polypeptide is Peroxidase N1 (Nicotiana tabacum (Common tobacco)).